A 319-amino-acid chain; its full sequence is tRNA uridine(34) hydroxylase (319 aa).

The Rhodanese domain occupies 124-218; that stretch reads LDEDTVILDA…YGKNEETKGE (95 aa). C178 acts as the Cysteine persulfide intermediate in catalysis.

It belongs to the TrhO family.

It carries out the reaction uridine(34) in tRNA + AH2 + O2 = 5-hydroxyuridine(34) in tRNA + A + H2O. In terms of biological role, catalyzes oxygen-dependent 5-hydroxyuridine (ho5U) modification at position 34 in tRNAs. The polypeptide is tRNA uridine(34) hydroxylase (Listeria monocytogenes serotype 4a (strain HCC23)).